The sequence spans 631 residues: Nucleoside triphosphatase I (631 aa).

The Helicase ATP-binding domain occupies 42-204 (FLGLDSMHSL…TMLVNLLRPG (163 aa)). 55–62 (HETGVGKT) is an ATP binding site. Residues 141-144 (DECH) carry the DEXH box motif. Residues 367-532 (KFIDVCLGIL…EFVQLFRVFK (166 aa)) form the Helicase C-terminal domain. The binding to the cap-specific mRNA (nucleoside-2'-O-)-methyltransferase stretch occupies residues 457–524 (DIFILDMTWN…EIIQSKSKEF (68 aa)).

The protein belongs to the helicase family. NPH I subfamily. As to quaternary structure, monomer. Interacts (via C-terminus) with RAP94/OPG109 (via N-terminus). Interacts with the cap-specific mRNA (nucleoside-2'-O-)-methyltransferase OPG102.

The protein resides in the virion. It carries out the reaction a ribonucleoside 5'-triphosphate + H2O = a ribonucleoside 5'-diphosphate + phosphate + H(+). Functionally, DNA-dependent ATPase that acts as a 5' to 3' translocase on single-stranded DNA and thereby plays a role in transcription termination of viral early genes. Uses forward translocation in concert with the viral RNA polymerase RAP94/OPG109 subunit and the capping enzyme/VTF to catalyze release of UUUUUNU-containing nascent RNA from the elongation complex. In addition, acts as a positive elongation factor to assist transcription through problematic sequences. The chain is Nucleoside triphosphatase I (OPG123) from Bos taurus (Bovine).